Reading from the N-terminus, the 447-residue chain is UDP-glycosyltransferase 76B1 (447 aa).

UDP-alpha-D-glucose is bound by residues Ser-269, 327–328 (WA), 345–353 (HCGWNSTLE), and 367–370 (FGDQ).

It belongs to the UDP-glycosyltransferase family. In terms of tissue distribution, expressed in roots, leaves, hydathodes, sepals and style.

In terms of biological role, glycosylates the amino acid-related molecules isoleucic acid (2-hydroxy-3-methylpentanoic acid) and valic acid (2-hydroxy-3-methylbutyric acid). Acts as a negative regulator of salicylic acid (SA)-dependent plant defense in the absence of pathogens and promotes the jasmonate (JA) response. Negatively influences the onset of senescence. This is UDP-glycosyltransferase 76B1 from Arabidopsis thaliana (Mouse-ear cress).